The primary structure comprises 273 residues: Probable membrane transporter protein YunE (273 aa).

8 consecutive transmembrane segments (helical) span residues 3–23, 50–70, 81–101, 105–125, 157–177, 185–205, 222–242, and 251–271; these read FVIL…IGLG, AIGT…LAYI, LIFF…SKLF, SFSV…MLKA, VGIA…IGGG, MLLF…IIFL, WLYA…GAAI, and IVMI…YEGI.

The protein belongs to the 4-toluene sulfonate uptake permease (TSUP) (TC 2.A.102) family.

The protein localises to the cell membrane. In Bacillus subtilis (strain 168), this protein is Probable membrane transporter protein YunE (yunE).